We begin with the raw amino-acid sequence, 431 residues long: Adenylosuccinate synthetase (431 aa).

GTP contacts are provided by residues 13–19 and 41–43; these read GDEGKGK and GHT. Aspartate 14 serves as the catalytic Proton acceptor. Mg(2+) is bound by residues aspartate 14 and glycine 41. IMP contacts are provided by residues 14-17, 39-42, threonine 130, arginine 144, glutamine 225, threonine 240, and arginine 304; these read DEGK and NAGH. The Proton donor role is filled by histidine 42. 300–306 contributes to the substrate binding site; it reads ATTGRKR. Residues arginine 306, 332 to 334, and 415 to 417 contribute to the GTP site; these read KLD and STG.

Belongs to the adenylosuccinate synthetase family. Homodimer. It depends on Mg(2+) as a cofactor.

Its subcellular location is the cytoplasm. It catalyses the reaction IMP + L-aspartate + GTP = N(6)-(1,2-dicarboxyethyl)-AMP + GDP + phosphate + 2 H(+). It participates in purine metabolism; AMP biosynthesis via de novo pathway; AMP from IMP: step 1/2. In terms of biological role, plays an important role in the de novo pathway of purine nucleotide biosynthesis. Catalyzes the first committed step in the biosynthesis of AMP from IMP. In Shewanella loihica (strain ATCC BAA-1088 / PV-4), this protein is Adenylosuccinate synthetase.